Consider the following 274-residue polypeptide: PTS system sorbose-specific EIID component (274 aa).

One can recognise a PTS EIID domain in the interval 4–273 (KKITQGDLVS…GIIGNALGFL (270 aa)). 6 consecutive transmembrane segments (helical) span residues 61–81 (LVFF…TAAM), 99–119 (IKVG…WGTL), 126–146 (LGAS…FFIF), 186–206 (ILGL…NVPL), 226–246 (ILDQ…MVRL), and 253–273 (PVWL…LGFL).

It is found in the cell inner membrane. The phosphoenolpyruvate-dependent sugar phosphotransferase system (PTS), a major carbohydrate active transport system, catalyzes the phosphorylation of incoming sugar substrates concomitant with their translocation across the cell membrane. The enzyme II SorABFM PTS system is involved in sorbose transport. The sequence is that of PTS system sorbose-specific EIID component from Klebsiella pneumoniae.